Reading from the N-terminus, the 801-residue chain is Fibroblast growth factor receptor 3 (801 aa).

The first 20 residues, 1–20 (MVVPACVLVFCVAVVAGATS), serve as a signal peptide directing secretion. Residues 21–369 (EPPGPEQRVV…TDEAGSVYAG (349 aa)) lie on the Extracellular side of the membrane. Residues 22 to 124 (PPGPEQRVVR…VLCHFSVRVT (103 aa)) enclose the Ig-like C2-type 1 domain. Cysteines 59 and 107 form a disulfide. Asn-96 is a glycosylation site (N-linked (GlcNAc...) asparagine). The segment at 125-146 (DAPSSGDDEDGEDVAEDTGAPY) is disordered. The segment covering 130-140 (GDDEDGEDVAE) has biased composition (acidic residues). Ig-like C2-type domains are found at residues 145 to 238 (PYWT…YTLD) and 247 to 349 (PILQ…AWLV). The cysteines at positions 170 and 222 are disulfide-linked. 5 N-linked (GlcNAc...) asparagine glycosylation sites follow: Asn-219, Asn-256, Asn-288, Asn-309, and Asn-322. Residues Cys-269 and Cys-333 are joined by a disulfide bond. A helical membrane pass occupies residues 370-390 (VLSYGVVFFLFILVVAAVILC). The Cytoplasmic segment spans residues 391 to 801 (RLRSPPKKGL…GPPSNGGPRT (411 aa)). Phosphoserine is present on residues Ser-438 and Ser-439. In terms of domain architecture, Protein kinase spans 466–756 (LTLGKPLGEG…LTVTSTDEYL (291 aa)). ATP is bound by residues 472–480 (LGEGCFGQV) and Lys-502. Asp-611 acts as the Proton acceptor in catalysis. Phosphotyrosine; by autocatalysis is present on residues Tyr-641, Tyr-642, Tyr-719, and Tyr-755. The segment at 762–801 (FEQYSPGGQDTPSSSSSGDDSVFTHDLLPPGPPSNGGPRT) is disordered. A compositionally biased stretch (low complexity) spans 766–782 (SPGGQDTPSSSSSGDDS). The segment covering 790 to 801 (PPGPPSNGGPRT) has biased composition (pro residues).

The protein belongs to the protein kinase superfamily. Tyr protein kinase family. Fibroblast growth factor receptor subfamily. Monomer. Homodimer after ligand binding. Interacts with FGF1, FGF2, FGF4, FGF6; FGF8, FGF9, FGF10, FGF17, FGF18, FGF19, FGF20 and FGF23 (in vitro). Interacts with KLB. Affinity for fibroblast growth factors (FGFs) is increased by heparan sulfate glycosaminoglycans that function as coreceptors. Likewise, KLB increases the affinity for FGF19 and FGF21. Interacts with PIK3R1, PLCG1, SOCS1 and SOCS3. In terms of processing, autophosphorylated. Binding of FGF family members together with heparan sulfate proteoglycan or heparin promotes receptor dimerization and autophosphorylation on tyrosine residues. Autophosphorylation occurs in trans between the two FGFR molecules present in the dimer. Phosphorylation at Tyr-719 is essential for stimulation of cell proliferation and activation of PIK3R1, STAT1 and MAP kinase signaling. Phosphorylation at Tyr-755 is required for interaction with PIK3R1 and PLCG1. Ubiquitinated. Is rapidly ubiquitinated after ligand binding and autophosphorylation, leading to receptor internalization and degradation. Subject to both proteasomal and lysosomal degradation. Post-translationally, N-glycosylated in the endoplasmic reticulum. The N-glycan chains undergo further maturation to an Endo H-resistant form in the Golgi apparatus. In terms of tissue distribution, in embryo, expressed in heart, lung, kidney, skin, head and liver but not in muscle. In adult, highest levels in brain. Also expressed in liver, lung, kidney, testis, ovary and uterus. Very low levels in heart, thymus, spleen and muscle.

The protein resides in the cell membrane. Its subcellular location is the cytoplasmic vesicle. The protein localises to the endoplasmic reticulum. The enzyme catalyses L-tyrosyl-[protein] + ATP = O-phospho-L-tyrosyl-[protein] + ADP + H(+). Its activity is regulated as follows. Present in an inactive conformation in the absence of bound ligand. Ligand binding leads to dimerization and activation by autophosphorylation on tyrosine residues. Its function is as follows. Tyrosine-protein kinase that acts as a cell-surface receptor for fibroblast growth factors and plays an essential role in the regulation of cell proliferation, differentiation and apoptosis. Plays an essential role in the regulation of chondrocyte differentiation, proliferation and apoptosis, and is required for normal skeleton development. Regulates both osteogenesis and postnatal bone mineralization by osteoblasts. Promotes apoptosis in chondrocytes, but can also promote cancer cell proliferation. Required for normal development of the inner ear. Phosphorylates PLCG1, CBL and FRS2. Ligand binding leads to the activation of several signaling cascades. Activation of PLCG1 leads to the production of the cellular signaling molecules diacylglycerol and inositol 1,4,5-trisphosphate. Phosphorylation of FRS2 triggers recruitment of GRB2, GAB1, PIK3R1 and SOS1, and mediates activation of RAS, MAPK1/ERK2, MAPK3/ERK1 and the MAP kinase signaling pathway, as well as of the AKT1 signaling pathway. Plays a role in the regulation of vitamin D metabolism. Mutations that lead to constitutive kinase activation or impair normal FGFR3 maturation, internalization and degradation lead to aberrant signaling. Over-expressed or constitutively activated FGFR3 promotes activation of STAT1, STAT5A and STAT5B. Plays a role in postnatal lung development. In Mus musculus (Mouse), this protein is Fibroblast growth factor receptor 3 (Fgfr3).